Consider the following 157-residue polypeptide: Small ribosomal subunit protein uS7c (157 aa).

Belongs to the universal ribosomal protein uS7 family. In terms of assembly, part of the 30S ribosomal subunit.

Its subcellular location is the plastid. The protein localises to the organellar chromatophore. In terms of biological role, one of the primary rRNA binding proteins, it binds directly to 16S rRNA where it nucleates assembly of the head domain of the 30S subunit. In Paulinella chromatophora, this protein is Small ribosomal subunit protein uS7c (rps7).